The chain runs to 269 residues: Shikimate dehydrogenase (NADP(+)) (269 aa).

Shikimate is bound by residues Ser-19 to Ser-21 and Thr-66. Lys-70 acts as the Proton acceptor in catalysis. Asp-82 lines the NADP(+) pocket. Residues Asn-91 and Asp-106 each coordinate shikimate. Residues Gly-130–Ala-134, Asn-153–Lys-158, and Ile-214 contribute to the NADP(+) site. Tyr-216 lines the shikimate pocket. Residue Gly-235 coordinates NADP(+). Gln-242 is a binding site for shikimate.

This sequence belongs to the shikimate dehydrogenase family. In terms of assembly, homodimer.

It catalyses the reaction shikimate + NADP(+) = 3-dehydroshikimate + NADPH + H(+). The protein operates within metabolic intermediate biosynthesis; chorismate biosynthesis; chorismate from D-erythrose 4-phosphate and phosphoenolpyruvate: step 4/7. In terms of biological role, involved in the biosynthesis of the chorismate, which leads to the biosynthesis of aromatic amino acids. Catalyzes the reversible NADPH linked reduction of 3-dehydroshikimate (DHSA) to yield shikimate (SA). This chain is Shikimate dehydrogenase (NADP(+)), found in Aquifex aeolicus (strain VF5).